A 351-amino-acid chain; its full sequence is Photosystem II D2 protein (351 aa).

The helical transmembrane segment at 39–59 (TSYLSIGGWFTGTTFVTSWYT) threads the bilayer. H116 is a binding site for chlorophyll a. Residues 123–139 (GFCLRQFEIARLVGIRP) form a helical membrane-spanning segment. Residues Q128 and N141 each contribute to the pheophytin a site. Residues 151 to 164 (IFVSVFLMYPLGQA) traverse the membrane as a helical segment. Chlorophyll a is bound at residue H196. A helical transmembrane segment spans residues 206 to 226 (AALLCAIHGATVQNTIFEDGD). H213 and F260 together coordinate a plastoquinone. H213 is a binding site for Fe cation. H267 lines the Fe cation pocket. A helical transmembrane segment spans residues 277–293 (GLWTSAIGIVGLALNLR).

The protein belongs to the reaction center PufL/M/PsbA/D family. As to quaternary structure, PSII is composed of 1 copy each of membrane proteins PsbA, PsbB, PsbC, PsbD, PsbE, PsbF, PsbH, PsbI, PsbJ, PsbK, PsbL, PsbM, PsbT, PsbX, PsbY, PsbZ, Psb30/Ycf12, at least 3 peripheral proteins of the oxygen-evolving complex and a large number of cofactors. It forms dimeric complexes. The D1/D2 heterodimer binds P680, chlorophylls that are the primary electron donor of PSII, and subsequent electron acceptors. It shares a non-heme iron and each subunit binds pheophytin, quinone, additional chlorophylls, carotenoids and lipids. There is also a Cl(-1) ion associated with D1 and D2, which is required for oxygen evolution. The PSII complex binds additional chlorophylls, carotenoids and specific lipids. serves as cofactor.

It localises to the plastid. Its subcellular location is the chloroplast thylakoid membrane. The catalysed reaction is 2 a plastoquinone + 4 hnu + 2 H2O = 2 a plastoquinol + O2. Photosystem II (PSII) is a light-driven water:plastoquinone oxidoreductase that uses light energy to abstract electrons from H(2)O, generating O(2) and a proton gradient subsequently used for ATP formation. It consists of a core antenna complex that captures photons, and an electron transfer chain that converts photonic excitation into a charge separation. The D1/D2 (PsbA/PsbD) reaction center heterodimer binds P680, the primary electron donor of PSII as well as several subsequent electron acceptors. D2 is needed for assembly of a stable PSII complex. This chain is Photosystem II D2 protein, found in Guillardia theta (Cryptophyte).